Consider the following 353-residue polypeptide: Soluble interferon alpha/beta receptor OPG204 (353 aa).

The first 21 residues, 1–21 (MTMKMMVHIYFVSLSLLLLLF), serve as a signal peptide directing secretion. 2 consecutive Ig-like C2-type domains span residues 67-139 (LGEP…KNGD) and 157-239 (PKTY…IVVS). 2 disulfide bridges follow: cysteine 75/cysteine 131 and cysteine 174/cysteine 223. Asparagine 119, asparagine 184, asparagine 263, asparagine 271, and asparagine 323 each carry an N-linked (GlcNAc...) asparagine; by host glycan. The Ig-like V-type domain occupies 248 to 347 (PSQDHRFKLI…HNYYFEKTLT (100 aa)). A disulfide bond links cysteine 274 and cysteine 335.

The protein belongs to the interleukin-1 receptor family. As to quaternary structure, interacts with host IFNA1.

It is found in the secreted. Its function is as follows. Counteracts the antiviral effects of host IFN-alpha/beta and key IFN-inducible proteins involved in viral RNA degradation suxh as host OAS1. Acts as a soluble IFN-alpha receptor and thus inhibits the interaction between host IFN-alpha and its receptor. This chain is Soluble interferon alpha/beta receptor OPG204 (OPG204), found in Homo sapiens (Human).